We begin with the raw amino-acid sequence, 404 residues long: Plasma serine protease inhibitor (404 aa).

The first 19 residues, 1–19 (MRLCLFLCLVLLGPRMATL), serve as a signal peptide directing secretion. The propeptide at 20–24 (RRSQK) is removed in mature form. O-linked (GalNAc...) threonine glycans are attached at residues Thr-35 and Thr-36. 3 N-linked (GlcNAc...) asparagine glycosylation sites follow: Asn-245, Asn-258, and Asn-334.

The protein belongs to the serpin family. As to quaternary structure, forms protease inhibiting heterodimers in extracellular body fluids with serine proteases such as activated protein C/coagulation factor V/F5, acrosin/ACR, chymotrypsinogen B/CTRB1, prothrombin/F2, factor Xa/F10, factor XI/F11, kallikrein/KLKB1, tissue kallikrein, trypsin/PRSS1, prostate specific antigen/KLK3, tissue plasminogen activator/PLAT and urinary plasminogen activator/PLAU. Forms membrane-anchored serine proteases inhibiting heterodimers with TMPRSS7 and TMPRSS11E. Interacts with SEMG2. N-glycosylated; glycans consist of a mixture of sialylated bi- (including sialyl-Lewis X epitopes), tri- and tetra-antennary complex-type chains; affects the maximal heparin- and thrombomodulin-enhanced rates of thrombin inhibition. O-glycosylated; further modified with 2 sialic acid residues. Proteolytically cleaved at the N-terminus; inhibits slightly the heparin- and thrombomodulin-enhanced rates of thrombin inhibition. N- and O-glycosylated. Post-translationally, proteolytically cleaved. Inhibition of proteases is accompanied by formation of a stable enzyme-inhibitor complex and by degradation of the serpin to lower molecular weight derivatives. Expressed strongly in the liver, and moderately in the kidney and testis, but not in other tissues tested.

It localises to the secreted. Its subcellular location is the extracellular space. Its activity is regulated as follows. Its inhibitory activity is greatly enhanced in the presence of glycosaminoglycans, heparin, thrombomodulin and phospholipids vesicles. Heparin-dependent serine protease inhibitor acting in body fluids and secretions. Inactivates serine proteases by binding irreversibly to their serine activation site. Involved in the regulation of intravascular and extravascular proteolytic activities. Plays hemostatic roles in the blood plasma. Acts as a procoagulant and pro-inflammatory factor by inhibiting the anticoagulant activated protein C factor as well as the generation of activated protein C factor by the thrombin/thrombomodulin complex. Acts as an anticoagulant factor by inhibiting blood coagulation factors like prothrombin, factor XI, factor Xa, plasma kallikrein and fibrinolytic enzymes such as tissue- and urinary-type plasminogen activators. In seminal plasma, inactivates several serine proteases implicated in the reproductive system. Inhibits the serpin acrosin; indirectly protects component of the male genital tract from being degraded by excessive released acrosin. Inhibits tissue- and urinary-type plasminogen activator, prostate-specific antigen and kallikrein activities; has a control on the sperm motility and fertilization. Inhibits the activated protein C-catalyzed degradation of SEMG1 and SEMG2; regulates the degradation of semenogelin during the process of transfer of spermatozoa from the male reproductive tract into the female tract. In urine, inhibits urinary-type plasminogen activator and kallikrein activities. Inactivates membrane-anchored serine proteases activities such as MPRSS7 and TMPRSS11E. Inhibits urinary-type plasminogen activator-dependent tumor cell invasion and metastasis. May also play a non-inhibitory role in seminal plasma and urine as a hydrophobic hormone carrier by its binding to retinoic acid. This Bos taurus (Bovine) protein is Plasma serine protease inhibitor (SERPINA5).